The following is a 270-amino-acid chain: Formamidopyrimidine-DNA glycosylase (270 aa).

P2 (schiff-base intermediate with DNA) is an active-site residue. Catalysis depends on E3, which acts as the Proton donor. The active-site Proton donor; for beta-elimination activity is K58. DNA-binding residues include H91, R110, and R151. The FPG-type zinc-finger motif lies at 236 to 270 (AVYGREGEPCTHCGAPLQGVRIGGRATIYCSQCQR). R260 functions as the Proton donor; for delta-elimination activity in the catalytic mechanism.

Belongs to the FPG family. As to quaternary structure, monomer. Zn(2+) serves as cofactor.

It catalyses the reaction Hydrolysis of DNA containing ring-opened 7-methylguanine residues, releasing 2,6-diamino-4-hydroxy-5-(N-methyl)formamidopyrimidine.. It carries out the reaction 2'-deoxyribonucleotide-(2'-deoxyribose 5'-phosphate)-2'-deoxyribonucleotide-DNA = a 3'-end 2'-deoxyribonucleotide-(2,3-dehydro-2,3-deoxyribose 5'-phosphate)-DNA + a 5'-end 5'-phospho-2'-deoxyribonucleoside-DNA + H(+). Its function is as follows. Involved in base excision repair of DNA damaged by oxidation or by mutagenic agents. Acts as a DNA glycosylase that recognizes and removes damaged bases. Has a preference for oxidized purines, such as 7,8-dihydro-8-oxoguanine (8-oxoG). Has AP (apurinic/apyrimidinic) lyase activity and introduces nicks in the DNA strand. Cleaves the DNA backbone by beta-delta elimination to generate a single-strand break at the site of the removed base with both 3'- and 5'-phosphates. This Acidithiobacillus ferrooxidans (strain ATCC 23270 / DSM 14882 / CIP 104768 / NCIMB 8455) (Ferrobacillus ferrooxidans (strain ATCC 23270)) protein is Formamidopyrimidine-DNA glycosylase.